The sequence spans 339 residues: HTH-type transcriptional regulator KdgR (339 aa).

Residues 9 to 64 (TTIKDVAECAGVSKSTVSRYINGKIDAISPEKVKNIKKAIAELNYRPSKMAQGLKI) enclose the HTH lacI-type domain. The segment at residues 11–30 (IKDVAECAGVSKSTVSRYIN) is a DNA-binding region (H-T-H motif).

Functionally, transcriptional repressor of the kdgRKAT and kduID operons for pectin utilization. The chain is HTH-type transcriptional regulator KdgR (kdgR) from Bacillus subtilis (strain 168).